A 272-amino-acid polypeptide reads, in one-letter code: Putative protein-disulfide oxidoreductase RP025 (272 aa).

The first 21 residues, 1–21, serve as a signal peptide directing secretion; it reads MRNIFIVLIFLFLSNCSEVKA. Positions 74-263 constitute a Thioredoxin domain; sequence DSREQKKPEI…ISKAVDKALD (190 aa). A disulfide bridge links C116 with C119.

The protein belongs to the thioredoxin family. DsbA subfamily.

It is found in the periplasm. In terms of biological role, may be required for disulfide bond formation in some proteins. This chain is Putative protein-disulfide oxidoreductase RP025, found in Rickettsia prowazekii (strain Madrid E).